The following is an 89-amino-acid chain: Large ribosomal subunit protein bL27 (89 aa).

A disordered region spans residues 1–22 (MAHTKKGGSSRNGRDSESKRLG).

The protein belongs to the bacterial ribosomal protein bL27 family.

This Brucella melitensis biotype 1 (strain ATCC 23456 / CCUG 17765 / NCTC 10094 / 16M) protein is Large ribosomal subunit protein bL27.